The following is a 121-amino-acid chain: Large ribosomal subunit protein uL18 (121 aa).

It belongs to the universal ribosomal protein uL18 family. Part of the 50S ribosomal subunit; part of the 5S rRNA/L5/L18/L25 subcomplex. Contacts the 5S and 23S rRNAs.

This is one of the proteins that bind and probably mediate the attachment of the 5S RNA into the large ribosomal subunit, where it forms part of the central protuberance. In Mesomycoplasma hyopneumoniae (strain J / ATCC 25934 / NCTC 10110) (Mycoplasma hyopneumoniae), this protein is Large ribosomal subunit protein uL18.